Reading from the N-terminus, the 120-residue chain is NAD(P)H-quinone oxidoreductase subunit 3 (120 aa).

3 helical membrane passes run 10-30 (LLVFLIVCALLPVLALGASAL), 64-84 (MFALVFVIFDVETVFLYPWAV), and 89-109 (LGLLAFVEALIFIAILVVGLV).

The protein belongs to the complex I subunit 3 family. In terms of assembly, NDH-1 can be composed of about 15 different subunits; different subcomplexes with different compositions have been identified which probably have different functions.

The protein localises to the cellular thylakoid membrane. The enzyme catalyses a plastoquinone + NADH + (n+1) H(+)(in) = a plastoquinol + NAD(+) + n H(+)(out). The catalysed reaction is a plastoquinone + NADPH + (n+1) H(+)(in) = a plastoquinol + NADP(+) + n H(+)(out). Its function is as follows. NDH-1 shuttles electrons from an unknown electron donor, via FMN and iron-sulfur (Fe-S) centers, to quinones in the respiratory and/or the photosynthetic chain. The immediate electron acceptor for the enzyme in this species is believed to be plastoquinone. Couples the redox reaction to proton translocation, and thus conserves the redox energy in a proton gradient. Cyanobacterial NDH-1 also plays a role in inorganic carbon-concentration. This chain is NAD(P)H-quinone oxidoreductase subunit 3, found in Synechococcus sp. (strain JA-3-3Ab) (Cyanobacteria bacterium Yellowstone A-Prime).